A 507-amino-acid polypeptide reads, in one-letter code: Mandelamide hydrolase (507 aa).

Catalysis depends on charge relay system residues Lys100 and Ser180. Catalysis depends on Ser204, which acts as the Acyl-ester intermediate.

Monomer.

It catalyses the reaction (R)-mandelamide + H2O = (R)-mandelate + NH4(+). Its activity is regulated as follows. Inhibited by 3,4-dichloroisocoumarin and PMSF. Functionally, hydrolyzes both the R- and the S-enantiomers of mandelamide, and phenylacetamide. Has lower activity on 3-phenylpropionaide and lactamide. Does not hydrolyze benzamide. Hydrolyzes esters and amides with little steric bulk. Preferentially hydrolyzes aromatic substrates. The chain is Mandelamide hydrolase from Pseudomonas putida (Arthrobacter siderocapsulatus).